We begin with the raw amino-acid sequence, 250 residues long: 2,3-bisphosphoglycerate-dependent phosphoglycerate mutase (250 aa).

Substrate-binding positions include 10–17 (RHGESQWN), 23–24 (TG), arginine 62, 89–92 (ERHY), lysine 100, 116–117 (RR), and 185–186 (GN). Residue histidine 11 is the Tele-phosphohistidine intermediate of the active site. The active-site Proton donor/acceptor is glutamate 89.

The protein belongs to the phosphoglycerate mutase family. BPG-dependent PGAM subfamily. Homodimer.

It carries out the reaction (2R)-2-phosphoglycerate = (2R)-3-phosphoglycerate. Its pathway is carbohydrate degradation; glycolysis; pyruvate from D-glyceraldehyde 3-phosphate: step 3/5. In terms of biological role, catalyzes the interconversion of 2-phosphoglycerate and 3-phosphoglycerate. The sequence is that of 2,3-bisphosphoglycerate-dependent phosphoglycerate mutase from Salmonella dublin (strain CT_02021853).